The chain runs to 238 residues: tRNA (guanine-N(7)-)-methyltransferase (238 aa).

4 residues coordinate S-adenosyl-L-methionine: Glu-68, Glu-93, Asp-120, and Asp-143. Asp-143 is an active-site residue. Substrate contacts are provided by residues Lys-147, Asp-179, and 216 to 219 (TKFE).

This sequence belongs to the class I-like SAM-binding methyltransferase superfamily. TrmB family.

It catalyses the reaction guanosine(46) in tRNA + S-adenosyl-L-methionine = N(7)-methylguanosine(46) in tRNA + S-adenosyl-L-homocysteine. It participates in tRNA modification; N(7)-methylguanine-tRNA biosynthesis. Its function is as follows. Catalyzes the formation of N(7)-methylguanine at position 46 (m7G46) in tRNA. The sequence is that of tRNA (guanine-N(7)-)-methyltransferase from Shewanella baltica (strain OS155 / ATCC BAA-1091).